The following is a 233-amino-acid chain: Large ribosomal subunit protein uL1 (233 aa).

Belongs to the universal ribosomal protein uL1 family. As to quaternary structure, part of the 50S ribosomal subunit.

In terms of biological role, binds directly to 23S rRNA. The L1 stalk is quite mobile in the ribosome, and is involved in E site tRNA release. Its function is as follows. Protein L1 is also a translational repressor protein, it controls the translation of the L11 operon by binding to its mRNA. This Psychrobacter cryohalolentis (strain ATCC BAA-1226 / DSM 17306 / VKM B-2378 / K5) protein is Large ribosomal subunit protein uL1.